The sequence spans 513 residues: GMP synthase [glutamine-hydrolyzing] (513 aa).

Residues 5-195 (LVLVIDFGGQ…VYNICGCTGD (191 aa)) enclose the Glutamine amidotransferase type-1 domain. Cysteine 82 functions as the Nucleophile in the catalytic mechanism. Active-site residues include histidine 169 and glutamate 171. Residues 196–388 (WKMDSFVEKT…LGIPEKLVFR (193 aa)) enclose the GMPS ATP-PPase domain. 223–229 (SGGVDSS) contributes to the ATP binding site.

As to quaternary structure, homodimer.

It carries out the reaction XMP + L-glutamine + ATP + H2O = GMP + L-glutamate + AMP + diphosphate + 2 H(+). Its pathway is purine metabolism; GMP biosynthesis; GMP from XMP (L-Gln route): step 1/1. In terms of biological role, catalyzes the synthesis of GMP from XMP. The chain is GMP synthase [glutamine-hydrolyzing] from Clostridium botulinum (strain Alaska E43 / Type E3).